A 274-amino-acid chain; its full sequence is Putative pyruvate, phosphate dikinase regulatory protein (274 aa).

149–156 provides a ligand contact to ADP; the sequence is GVSRSSKT.

Belongs to the pyruvate, phosphate/water dikinase regulatory protein family. PDRP subfamily.

It carries out the reaction N(tele)-phospho-L-histidyl/L-threonyl-[pyruvate, phosphate dikinase] + ADP = N(tele)-phospho-L-histidyl/O-phospho-L-threonyl-[pyruvate, phosphate dikinase] + AMP + H(+). It catalyses the reaction N(tele)-phospho-L-histidyl/O-phospho-L-threonyl-[pyruvate, phosphate dikinase] + phosphate + H(+) = N(tele)-phospho-L-histidyl/L-threonyl-[pyruvate, phosphate dikinase] + diphosphate. Functionally, bifunctional serine/threonine kinase and phosphorylase involved in the regulation of the pyruvate, phosphate dikinase (PPDK) by catalyzing its phosphorylation/dephosphorylation. This is Putative pyruvate, phosphate dikinase regulatory protein from Rhizorhabdus wittichii (strain DSM 6014 / CCUG 31198 / JCM 15750 / NBRC 105917 / EY 4224 / RW1) (Sphingomonas wittichii).